The chain runs to 55 residues: IATQVDCSEHPKPACTLDYRPICGSDSKTYSNKCDFCNAVMDSNGTLTLSHFGKC.

The 51-residue stretch at Val-5–Cys-55 folds into the Kazal-like domain. 3 disulfide bridges follow: Cys-7–Cys-37, Cys-15–Cys-34, and Cys-23–Cys-55. A glycan (N-linked (GlcNAc...) asparagine) is linked at Asn-44.

The protein resides in the secreted. This chain is Ovomucoid, found in Dacelo novaeguineae (Laughing kookaburra).